Here is a 428-residue protein sequence, read N- to C-terminus: Glutamate--tRNA ligase 2 (428 aa).

Residues 6–16 (PSPTGDMRTEQ) carry the 'HIGH' region motif.

The protein belongs to the class-I aminoacyl-tRNA synthetase family. Glutamate--tRNA ligase type 1 subfamily. As to quaternary structure, monomer.

The protein resides in the cytoplasm. The catalysed reaction is tRNA(Glu) + L-glutamate + ATP = L-glutamyl-tRNA(Glu) + AMP + diphosphate. Its function is as follows. Catalyzes the attachment of glutamate to tRNA(Glu) in a two-step reaction: glutamate is first activated by ATP to form Glu-AMP and then transferred to the acceptor end of tRNA(Glu). In Sulfurovum sp. (strain NBC37-1), this protein is Glutamate--tRNA ligase 2.